A 131-amino-acid polypeptide reads, in one-letter code: Small ribosomal subunit protein uS8 (131 aa).

This sequence belongs to the universal ribosomal protein uS8 family. As to quaternary structure, part of the 30S ribosomal subunit. Contacts proteins S5 and S12.

One of the primary rRNA binding proteins, it binds directly to 16S rRNA central domain where it helps coordinate assembly of the platform of the 30S subunit. The polypeptide is Small ribosomal subunit protein uS8 (Neorickettsia sennetsu (strain ATCC VR-367 / Miyayama) (Ehrlichia sennetsu)).